A 194-amino-acid polypeptide reads, in one-letter code: Imidazoleglycerol-phosphate dehydratase (194 aa).

This sequence belongs to the imidazoleglycerol-phosphate dehydratase family.

It is found in the cytoplasm. The catalysed reaction is D-erythro-1-(imidazol-4-yl)glycerol 3-phosphate = 3-(imidazol-4-yl)-2-oxopropyl phosphate + H2O. The protein operates within amino-acid biosynthesis; L-histidine biosynthesis; L-histidine from 5-phospho-alpha-D-ribose 1-diphosphate: step 6/9. The chain is Imidazoleglycerol-phosphate dehydratase from Thermus thermophilus (strain ATCC 27634 / DSM 579 / HB8).